Here is a 203-residue protein sequence, read N- to C-terminus: UPF0637 protein EF_3078 (203 aa).

This sequence belongs to the UPF0637 family.

The chain is UPF0637 protein EF_3078 from Enterococcus faecalis (strain ATCC 700802 / V583).